A 208-amino-acid chain; its full sequence is Imidazoleglycerol-phosphate dehydratase (208 aa).

This sequence belongs to the imidazoleglycerol-phosphate dehydratase family.

Its subcellular location is the cytoplasm. The catalysed reaction is D-erythro-1-(imidazol-4-yl)glycerol 3-phosphate = 3-(imidazol-4-yl)-2-oxopropyl phosphate + H2O. It functions in the pathway amino-acid biosynthesis; L-histidine biosynthesis; L-histidine from 5-phospho-alpha-D-ribose 1-diphosphate: step 6/9. The chain is Imidazoleglycerol-phosphate dehydratase from Arthrobacter sp. (strain FB24).